The sequence spans 195 residues: 2-amino-4-hydroxy-6-hydroxymethyldihydropteridine pyrophosphokinase (195 aa).

The protein belongs to the HPPK family.

The enzyme catalyses 6-hydroxymethyl-7,8-dihydropterin + ATP = (7,8-dihydropterin-6-yl)methyl diphosphate + AMP + H(+). The protein operates within cofactor biosynthesis; tetrahydrofolate biosynthesis; 2-amino-4-hydroxy-6-hydroxymethyl-7,8-dihydropteridine diphosphate from 7,8-dihydroneopterin triphosphate: step 4/4. Its function is as follows. Catalyzes the transfer of pyrophosphate from adenosine triphosphate (ATP) to 6-hydroxymethyl-7,8-dihydropterin, an enzymatic step in folate biosynthesis pathway. This Synechocystis sp. (strain ATCC 27184 / PCC 6803 / Kazusa) protein is 2-amino-4-hydroxy-6-hydroxymethyldihydropteridine pyrophosphokinase (folK).